The chain runs to 754 residues: 17S U2 SnRNP complex component HTATSF1 (754 aa).

Disordered regions lie at residues 1 to 53 (MSGT…YEWD) and 81 to 122 (GASS…KAES). S2 bears the N-acetylserine mark. Residues 90–122 (EDVHARTAEEPPQEKAPEPTDPRKKGEKRKAES) show a composition bias toward basic and acidic residues. RRM domains lie at 133-218 (TNVY…VAKF) and 264-349 (RVVI…AWDG). The interval 259–353 (RMRHERVVII…AQAWDGTTDY (95 aa)) is U2AF homology motif (UHM). An N6-acetyllysine modification is found at K297. Residues 380 to 415 (RGLRRSDSVSASERAGPSRARHFSEHPSTSKMNAQE) are disordered. Residues 381 to 754 (GLRRSDSVSA…ILSSDDDDDI (374 aa)) form a mediates interaction with the P-TEFb complex region. S387, S403, S407, and S409 each carry phosphoserine. Residues 405–415 (HPSTSKMNAQE) are compositionally biased toward polar residues. Glycyl lysine isopeptide (Lys-Gly) (interchain with G-Cter in SUMO2) cross-links involve residues K429 and K430. A disordered region spans residues 433–754 (KTEDGGEFEE…ILSSDDDDDI (322 aa)). S445, S452, and S453 each carry phosphoserine. The span at 462–476 (CPGKESEEGCPKRGF) shows a compositional bias: basic and acidic residues. S481, S485, S494, S498, S521, and S529 each carry phosphoserine. The span at 508-538 (LRNDCEENGFAKESEDDPNKESEEEVGPTKE) shows a compositional bias: basic and acidic residues. The span at 539-552 (SEEDDSEKESDEDC) shows a compositional bias: acidic residues. Over residues 553-563 (SEKQSEDGSER) the composition is skewed to basic and acidic residues. Residues S557, S561, and S579 each carry the phosphoserine modification. Over residues 564–579 (EFEENGLEKDLDEEGS) the composition is skewed to acidic residues. Residues 580 to 590 (EKELHENVLDK) show a composition bias toward basic and acidic residues. The span at 591–606 (ELEENDSENSEFEDDG) shows a compositional bias: acidic residues. Residues S597, S600, S607, S616, and S624 each carry the phosphoserine modification. Acidic residues-rich tracts occupy residues 613–633 (EEGSEREFDEDSDEKEEEEDT) and 640–651 (DESNEKEDEEYA). T633 bears the Phosphothreonine mark. A Phosphoserine modification is found at S642. Over residues 652 to 674 (DEKGLEAADKKEEEGDADEKLFE) the composition is skewed to basic and acidic residues. The span at 675 to 713 (ESDDKEDEDADGKEVEDADEKLFEDDDSNEKLFDEEEDS) shows a compositional bias: acidic residues. A phosphoserine mark is found at S676, S702, S713, S721, and S748. Positions 714-725 (NEKLFDDSDERG) are enriched in basic and acidic residues.

This sequence belongs to the HTATSF1 family. In terms of assembly, component of the 17S U2 SnRNP complex, a ribonucleoprotein complex that contains small nuclear RNA (snRNA) U2 and a number of specific proteins. Within the 17S U2 SnRNP complex, interacts (via UHM region) directly with SF3B1. Component of a complex which is at least composed of HTATSF1/Tat-SF1, the P-TEFb complex components CDK9 and CCNT1, RNA polymerase II, SUPT5H, and NCL/nucleolin. Interacts with GTF2F2/RAP30 and POLR2A. Interacts with TCERG1/CA150. Interacts with (poly-ADP-ribosylated) RPA1; promoting HTATSF1 recruitment to DNA damage sites. Interacts (when phosphorylated) with TOPBP1; promoting recruitment of TOPBP1 to DNA damage sites during S-phase. In terms of processing, phosphorylation at Ser-748 by CK2 during S-phase in response to DNA damage promotes interaction with TOPBP1 and double-strand break (DSB) repair via homologous recombination.

Its subcellular location is the nucleus. It localises to the chromosome. In terms of biological role, component of the 17S U2 SnRNP complex of the spliceosome, a large ribonucleoprotein complex that removes introns from transcribed pre-mRNAs. The 17S U2 SnRNP complex (1) directly participates in early spliceosome assembly and (2) mediates recognition of the intron branch site during pre-mRNA splicing by promoting the selection of the pre-mRNA branch-site adenosine, the nucleophile for the first step of splicing. Within the 17S U2 SnRNP complex, HTATSF1 is required to stabilize the branchpoint-interacting stem loop. HTATSF1 is displaced from the 17S U2 SnRNP complex before the stable addition of the 17S U2 SnRNP complex to the spliceosome, destabilizing the branchpoint-interacting stem loop and allowing to probe intron branch site sequences. Also acts as a regulator of transcriptional elongation, possibly by mediating the reciprocal stimulatory effect of splicing on transcriptional elongation. Involved in double-strand break (DSB) repair via homologous recombination in S-phase by promoting the recruitment of TOPBP1 to DNA damage sites. Mechanistically, HTATSF1 is (1) recruited to DNA damage sites in S-phase via interaction with poly-ADP-ribosylated RPA1 and (2) phosphorylated by CK2, promoting recruitment of TOPBP1, thereby facilitating RAD51 nucleofilaments formation and RPA displacement, followed by homologous recombination. This is 17S U2 SnRNP complex component HTATSF1 (HTATSF1) from Pongo abelii (Sumatran orangutan).